A 632-amino-acid chain; its full sequence is Threonine--tRNA ligase (632 aa).

The TGS domain maps to 1-59 (MIRITFLAKQKVEEYSSRVTGFDILQPDISKEAIALRVNGELYDLSREIESDTEIDVIQ). The catalytic stretch occupies residues 240-532 (DHRRIAKDMD…LIEHYAGKFP (293 aa)). Zn(2+)-binding residues include C332, H383, and H509.

It belongs to the class-II aminoacyl-tRNA synthetase family. In terms of assembly, homodimer. Zn(2+) serves as cofactor.

The protein resides in the cytoplasm. It catalyses the reaction tRNA(Thr) + L-threonine + ATP = L-threonyl-tRNA(Thr) + AMP + diphosphate + H(+). Functionally, catalyzes the attachment of threonine to tRNA(Thr) in a two-step reaction: L-threonine is first activated by ATP to form Thr-AMP and then transferred to the acceptor end of tRNA(Thr). Also edits incorrectly charged L-seryl-tRNA(Thr). The sequence is that of Threonine--tRNA ligase from Wolbachia sp. subsp. Brugia malayi (strain TRS).